A 64-amino-acid chain; its full sequence is Large ribosomal subunit protein eL37 (64 aa).

Zn(2+) contacts are provided by Cys20, Cys23, Cys35, and Cys38. The C4-type zinc finger occupies 20–38; the sequence is CRRCGRRSFHVRKKVCAAC.

This sequence belongs to the eukaryotic ribosomal protein eL37 family. It depends on Zn(2+) as a cofactor.

Binds to the 23S rRNA. In Methanococcus maripaludis (strain C5 / ATCC BAA-1333), this protein is Large ribosomal subunit protein eL37.